The following is a 130-amino-acid chain: Small ribosomal subunit protein uS8 (130 aa).

Belongs to the universal ribosomal protein uS8 family. As to quaternary structure, part of the 30S ribosomal subunit. Contacts proteins S5 and S12.

Its function is as follows. One of the primary rRNA binding proteins, it binds directly to 16S rRNA central domain where it helps coordinate assembly of the platform of the 30S subunit. In Idiomarina loihiensis (strain ATCC BAA-735 / DSM 15497 / L2-TR), this protein is Small ribosomal subunit protein uS8.